The chain runs to 418 residues: Odorant receptor 13a (418 aa).

The Cytoplasmic portion of the chain corresponds to 1–38; sequence MFYSYPYKALSFPIQCVWLKLNGSWPLTESSRPWRSQS. Residues 39-59 form a helical membrane-spanning segment; the sequence is LLATAYIVWAWYVIASVGITI. Topologically, residues 60–70 are extracellular; the sequence is SYQTAFLLNNL. Asn69 is a glycosylation site (N-linked (GlcNAc...) asparagine). A helical transmembrane segment spans residues 71 to 91; it reads SDIIITTENCCTTFMGVLNFV. At 92–140 the chain is on the cytoplasmic side; that stretch reads RLIHLRLNQRKFRQLIENFSYEIWIPNSSKNNVAAECRRRMVTFSIMTS. Residues 141–161 traverse the membrane as a helical segment; it reads LLACLIIMYCVLPLVEIFFGP. Topologically, residues 162-195 are extracellular; it reads AFDAQNKPFPYKMIFPYDAQSSWIRYVMTYIFTS. A helical transmembrane segment spans residues 196–216; it reads YAGICVVTTLFAEDTILGFFI. At 217-273 the chain is on the cytoplasmic side; the sequence is TYTCGQFHLLHQRIAGLFAGSNAELAESIQLERLKRIVEKHNNIISFAKRLEDFFNP. The helical transmembrane segment at 274 to 294 threads the bilayer; sequence ILLANLMISSVLICMVGFQIV. Over 295-299 the chain is Extracellular; the sequence is TGKNM. Residues 300-320 traverse the membrane as a helical segment; that stretch reads FIGDYVKFIIYISSALSQLYV. The Cytoplasmic segment spans residues 321–385; that stretch reads LCENGDALIK…PVRITAFKFS (65 aa). Residues 386-406 form a helical membrane-spanning segment; that stretch reads TLSLQSFTAILSTSISYFTLL. Residues 407-418 are Extracellular-facing; that stretch reads RSVYFDDEKKLD.

It belongs to the insect chemoreceptor superfamily. Heteromeric odorant receptor channel (TC 1.A.69) family. Or1a subfamily. As to quaternary structure, interacts with Orco. Complexes exist early in the endomembrane system in olfactory sensory neurons (OSNs), coupling these complexes to the conserved ciliary trafficking pathway. Expressed in olfactory sensory neurons in the antenna.

It localises to the cell membrane. Odorant receptor which mediates acceptance or avoidance behavior, depending on its substrates. The odorant receptor repertoire encodes a large collection of odor stimuli that vary widely in identity, intensity, and duration. May form a complex with Orco to form odorant-sensing units, providing sensitive and prolonged odorant signaling and calcium permeability. Involved in the behavioral responses to octanol, nonanol, and pentyl acetate. The sequence is that of Odorant receptor 13a (Or13a) from Drosophila melanogaster (Fruit fly).